The sequence spans 153 residues: MDQETVGNVVLLAIVTLISVVQNGFFAHKVEHESRTQNGRSFQRTGTLAFERVYTANQNCVDAYPTFLAVLWSAGLLCSQVPAAFAGLMYLLVRQKYFVGYLGERTQSTPGYIFGKRIILFLFLMSVAGIFNYYLIFFFGSDFENYIKTVTTT.

Over 1–8 (MDQETVGN) the chain is Lumenal. The helical transmembrane segment at 9–30 (VVLLAIVTLISVVQNGFFAHKV) threads the bilayer. Residues 31 to 52 (EHESRTQNGRSFQRTGTLAFER) are Cytoplasmic-facing. A helical membrane pass occupies residues 53–77 (VYTANQNCVDAYPTFLAVLWSAGLL). Topologically, residues 78–80 (CSQ) are lumenal. Residues 81–102 (VPAAFAGLMYLLVRQKYFVGYL) traverse the membrane as a helical segment. At 103 to 107 (GERTQ) the chain is on the cytoplasmic side. Residues 108–115 (STPGYIFG) lie within the membrane without spanning it. A helical transmembrane segment spans residues 116–128 (KRIILFLFLMSVA). At 129–153 (GIFNYYLIFFFGSDFENYIKTVTTT) the chain is on the lumenal side.

Belongs to the MAPEG family. As to quaternary structure, homotrimer. Interacts with LTC4S and ALOX5.

Its subcellular location is the nucleus membrane. The protein localises to the endoplasmic reticulum membrane. Functionally, required for leukotriene biosynthesis by ALOX5 (5-lipoxygenase). Anchors ALOX5 to the membrane. Binds arachidonic acid, and could play an essential role in the transfer of arachidonic acid to ALOX5. Binds to MK-886, a compound that blocks the biosynthesis of leukotrienes. This chain is Arachidonate 5-lipoxygenase-activating protein (ALOX5AP), found in Macaca mulatta (Rhesus macaque).